Consider the following 407-residue polypeptide: Imidazolonepropionase (407 aa).

Residues histidine 68 and histidine 70 each contribute to the Fe(3+) site. 2 residues coordinate Zn(2+): histidine 68 and histidine 70. 3 residues coordinate 4-imidazolone-5-propanoate: arginine 77, tyrosine 140, and histidine 173. Residue tyrosine 140 participates in N-formimidoyl-L-glutamate binding. Histidine 238 lines the Fe(3+) pocket. Histidine 238 provides a ligand contact to Zn(2+). Residue glutamine 241 participates in 4-imidazolone-5-propanoate binding. Aspartate 313 lines the Fe(3+) pocket. Residue aspartate 313 participates in Zn(2+) binding. Residues asparagine 315 and glycine 317 each contribute to the N-formimidoyl-L-glutamate site. Threonine 318 serves as a coordination point for 4-imidazolone-5-propanoate.

This sequence belongs to the metallo-dependent hydrolases superfamily. HutI family. Zn(2+) serves as cofactor. Fe(3+) is required as a cofactor.

It is found in the cytoplasm. It catalyses the reaction 4-imidazolone-5-propanoate + H2O = N-formimidoyl-L-glutamate. It participates in amino-acid degradation; L-histidine degradation into L-glutamate; N-formimidoyl-L-glutamate from L-histidine: step 3/3. Catalyzes the hydrolytic cleavage of the carbon-nitrogen bond in imidazolone-5-propanoate to yield N-formimidoyl-L-glutamate. It is the third step in the universal histidine degradation pathway. The polypeptide is Imidazolonepropionase (Burkholderia multivorans (strain ATCC 17616 / 249)).